Reading from the N-terminus, the 308-residue chain is Acetyl-coenzyme A carboxylase carboxyl transferase subunit beta 1 (308 aa).

The CoA carboxyltransferase N-terminal domain maps to 25 to 294 (VWTKCTSCEQ…PLVVSVNESP (270 aa)). Residues cysteine 29, cysteine 32, cysteine 48, and cysteine 51 each coordinate Zn(2+). A C4-type zinc finger spans residues 29–51 (CTSCEQVLYHAELERNLEVCPKC). The interval 288–308 (VSVNESPNEEPYSVPEVDEKG) is disordered.

It belongs to the AccD/PCCB family. As to quaternary structure, acetyl-CoA carboxylase is a heterohexamer composed of biotin carboxyl carrier protein (AccB), biotin carboxylase (AccC) and two subunits each of ACCase subunit alpha (AccA) and ACCase subunit beta (AccD). Zn(2+) serves as cofactor.

The protein resides in the cytoplasm. It carries out the reaction N(6)-carboxybiotinyl-L-lysyl-[protein] + acetyl-CoA = N(6)-biotinyl-L-lysyl-[protein] + malonyl-CoA. The protein operates within lipid metabolism; malonyl-CoA biosynthesis; malonyl-CoA from acetyl-CoA: step 1/1. Component of the acetyl coenzyme A carboxylase (ACC) complex. Biotin carboxylase (BC) catalyzes the carboxylation of biotin on its carrier protein (BCCP) and then the CO(2) group is transferred by the transcarboxylase to acetyl-CoA to form malonyl-CoA. In Vibrio parahaemolyticus serotype O3:K6 (strain RIMD 2210633), this protein is Acetyl-coenzyme A carboxylase carboxyl transferase subunit beta 1.